We begin with the raw amino-acid sequence, 90 residues long: Barrier-to-autointegration factor-like protein (90 aa).

The protein belongs to the BAF family. Homodimer. Heterodimerizes with BANF1.

It localises to the nucleus. The protein localises to the cytoplasm. In terms of biological role, may play a role in BANF1 regulation and influence tissue-specific roles of BANF1. The sequence is that of Barrier-to-autointegration factor-like protein (BANF2) from Bos taurus (Bovine).